Reading from the N-terminus, the 724-residue chain is Outer spore wall protein 2 (724 aa).

2 disordered regions span residues 407–427 and 477–497; these read NSGQ…KNRV and TSGG…YDDK.

It is found in the cytoplasm. Its subcellular location is the prospore membrane. May be involved in a late step of spore wall assembly. The protein is Outer spore wall protein 2 (OSW2) of Saccharomyces cerevisiae (strain ATCC 204508 / S288c) (Baker's yeast).